The following is a 239-amino-acid chain: MICOS complex subunit mic25a (239 aa).

A lipid anchor (N-myristoyl glycine) is attached at Gly-2. 2 disordered regions span residues 27 to 88 and 113 to 133; these read VKLS…KKRY and DISR…ERAK. Residues 50–78 are compositionally biased toward polar residues; sequence NKENQGHQTRTPSTSDAQAPKTQAKTTFP. The segment covering 79–88 has biased composition (basic and acidic residues); sequence DSKEELKKRY. Residues 79–166 adopt a coiled-coil conformation; the sequence is DSKEELKKRY…ITQLEKKNEE (88 aa). One can recognise a CHCH domain in the interval 192 to 234; sequence EPVCLNLQAQILNCYRENREQTLQCSDLAKEYMQCINAAKKNL. Short sequence motifs (cx9C motif) lie at residues 195–205 and 216–226; these read CLNLQAQILNC and CSDLAKEYMQC. 2 cysteine pairs are disulfide-bonded: Cys-195–Cys-226 and Cys-205–Cys-216.

Belongs to the MICOS complex subunit Mic19 family. Metazoan Mic25 subfamily. Component of the mitochondrial contact site and cristae organizing system (MICOS) complex (also known as MINOS or MitOS complex).

The protein localises to the mitochondrion inner membrane. Functionally, component of the MICOS complex, a large protein complex of the mitochondrial inner membrane that plays crucial roles in the maintenance of crista junctions, inner membrane architecture, and formation of contact sites to the outer membrane. In Danio rerio (Zebrafish), this protein is MICOS complex subunit mic25a (chchd6a).